The following is a 309-amino-acid chain: Homoserine O-succinyltransferase (309 aa).

Cys-142 (acyl-thioester intermediate) is an active-site residue. Lys-163 and Ser-192 together coordinate substrate. His-235 acts as the Proton acceptor in catalysis. Glu-237 is an active-site residue. Arg-249 provides a ligand contact to substrate.

It belongs to the MetA family.

It is found in the cytoplasm. It catalyses the reaction L-homoserine + succinyl-CoA = O-succinyl-L-homoserine + CoA. Its pathway is amino-acid biosynthesis; L-methionine biosynthesis via de novo pathway; O-succinyl-L-homoserine from L-homoserine: step 1/1. In terms of biological role, transfers a succinyl group from succinyl-CoA to L-homoserine, forming succinyl-L-homoserine. This Klebsiella pneumoniae subsp. pneumoniae (strain ATCC 700721 / MGH 78578) protein is Homoserine O-succinyltransferase.